The chain runs to 192 residues: MIAIIDYGLGNISNVTRAIQHLGYDVILTCNDKDVQKAEAIVLPGVGHFQDAMHSIEEKSIKDMLKNIHDKPVIGICLGMQLLFQHSAEGDVSGLELVPGNIVPIQSSHPIPHLGWNELKSTHPLLQSDVYFVHSYQAEMSEYVVAYADYGTKIPGVIQYRNYIGIQFHPEKSGTYGLEILNQALKGGFIND.

In terms of domain architecture, Glutamine amidotransferase type-1 spans 1–192 (MIAIIDYGLG…QALKGGFIND (192 aa)). The Nucleophile role is filled by Cys77. Catalysis depends on residues His169 and Glu171.

As to quaternary structure, heterodimer of HisH and HisF.

It localises to the cytoplasm. The enzyme catalyses 5-[(5-phospho-1-deoxy-D-ribulos-1-ylimino)methylamino]-1-(5-phospho-beta-D-ribosyl)imidazole-4-carboxamide + L-glutamine = D-erythro-1-(imidazol-4-yl)glycerol 3-phosphate + 5-amino-1-(5-phospho-beta-D-ribosyl)imidazole-4-carboxamide + L-glutamate + H(+). It catalyses the reaction L-glutamine + H2O = L-glutamate + NH4(+). The protein operates within amino-acid biosynthesis; L-histidine biosynthesis; L-histidine from 5-phospho-alpha-D-ribose 1-diphosphate: step 5/9. IGPS catalyzes the conversion of PRFAR and glutamine to IGP, AICAR and glutamate. The HisH subunit catalyzes the hydrolysis of glutamine to glutamate and ammonia as part of the synthesis of IGP and AICAR. The resulting ammonia molecule is channeled to the active site of HisF. The chain is Imidazole glycerol phosphate synthase subunit HisH from Staphylococcus epidermidis (strain ATCC 12228 / FDA PCI 1200).